Consider the following 270-residue polypeptide: Hydroxyethylthiazole kinase (270 aa).

Met-47 contributes to the substrate binding site. ATP is bound by residues Arg-123 and Ser-170. Gly-197 lines the substrate pocket.

Belongs to the Thz kinase family. It depends on Mg(2+) as a cofactor.

The catalysed reaction is 5-(2-hydroxyethyl)-4-methylthiazole + ATP = 4-methyl-5-(2-phosphooxyethyl)-thiazole + ADP + H(+). It functions in the pathway cofactor biosynthesis; thiamine diphosphate biosynthesis; 4-methyl-5-(2-phosphoethyl)-thiazole from 5-(2-hydroxyethyl)-4-methylthiazole: step 1/1. Its function is as follows. Catalyzes the phosphorylation of the hydroxyl group of 4-methyl-5-beta-hydroxyethylthiazole (THZ). In Syntrophus aciditrophicus (strain SB), this protein is Hydroxyethylthiazole kinase.